Reading from the N-terminus, the 356-residue chain is Tyrosine recombinase XerS (356 aa).

Residues 16-121 form the Core-binding (CB) domain; that stretch reads VMPWYVLDYY…ALSSLYKYLT (106 aa). Residues 169 to 354 enclose the Tyr recombinase domain; that stretch reads AFLDYVDKEY…VNDEQKNALD (186 aa). Active-site residues include arginine 210, lysine 234, histidine 306, arginine 309, and histidine 332. Tyrosine 341 (O-(3'-phospho-DNA)-tyrosine intermediate) is an active-site residue.

Belongs to the 'phage' integrase family. XerS subfamily.

The protein resides in the cytoplasm. With respect to regulation, ftsK is required for recombination. In terms of biological role, site-specific tyrosine recombinase, which acts by catalyzing the cutting and rejoining of the recombining DNA molecules. Essential to convert dimers of the bacterial chromosome into monomers to permit their segregation at cell division. In Streptococcus pyogenes serotype M28 (strain MGAS6180), this protein is Tyrosine recombinase XerS.